The following is a 76-amino-acid chain: Pigment-dispersing hormone A peptides (76 aa).

Residues 1–20 (MRSAMVVLVLVAMVAVFTRA) form the signal peptide. Alanine 73 bears the Alanine amide mark.

The protein belongs to the arthropod PDH family. As to expression, optical ganglia of the eyestalk.

It is found in the secreted. Functionally, the pigment-dispersing hormone causes the migration of the distal retinal pigment into the proximal end of the pigment chromatophore cells and thus decreases the amount of light entering the retinulas. May also function as a neurotransmitter and/or neuromodulator. In Faxonius limosus (Spinycheek crayfish), this protein is Pigment-dispersing hormone A peptides.